Consider the following 293-residue polypeptide: NAD-dependent protein deacetylase (293 aa).

The Deacetylase sirtuin-type domain maps to 5–282 (PAHDHHTLQD…LHAPPHLPRA (278 aa)). Residues 27 to 47 (GAGC…GGWK) and 105 to 108 (QNVD) contribute to the NAD(+) site. His123 acts as the Proton acceptor in catalysis. Residues Cys131, Cys134, Cys182, and Cys185 each contribute to the Zn(2+) site. Residues 222–224 (GSS), 248–250 (NFG), and Cys266 contribute to the NAD(+) site.

Belongs to the sirtuin family. Class II subfamily. The cofactor is Zn(2+).

It is found in the cytoplasm. The catalysed reaction is N(6)-acetyl-L-lysyl-[protein] + NAD(+) + H2O = 2''-O-acetyl-ADP-D-ribose + nicotinamide + L-lysyl-[protein]. In terms of biological role, NAD-dependent protein deacetylase which modulates the activities of several enzymes which are inactive in their acetylated form. The chain is NAD-dependent protein deacetylase from Xanthomonas axonopodis pv. citri (strain 306).